We begin with the raw amino-acid sequence, 449 residues long: TNF receptor-associated factor family protein DDB_G0272340 (449 aa).

The RING-type; degenerate zinc-finger motif lies at 33-76 (CPICEECIMDVNKCEALQCKEGHVHCRLCWMKSLESKKECMTCR). 2 consecutive TRAF-type zinc fingers follow at residues 133–187 (GHIK…IDDS) and 189–251 (VHYS…SELS). The stretch at 263–309 (MEATIDQHICKFEKSEKEYKKLELEYNRLKDDFKILQSELKVIRELK) forms a coiled coil. Residues 311–437 (NYQNKWVITN…QNSVTLNINI (127 aa)) form the MATH domain.

Belongs to the TNF receptor-associated factor family. A subfamily.

It is found in the cytoplasm. In terms of biological role, probable adapter protein and signal transducer that links members of the tumor necrosis factor receptor family to different signaling pathways by association with the receptor cytoplasmic domain and kinases. The sequence is that of TNF receptor-associated factor family protein DDB_G0272340 from Dictyostelium discoideum (Social amoeba).